A 422-amino-acid polypeptide reads, in one-letter code: Protein phosphatase 1 regulatory subunit 36 (422 aa).

As to quaternary structure, interacts with PPP1CA.

Inhibits phosphatase activity of protein phosphatase 1 (PP1) complexes. This is Protein phosphatase 1 regulatory subunit 36 (PPP1R36) from Homo sapiens (Human).